A 191-amino-acid chain; its full sequence is MKKFLFKQKFCESLPKSFSKTLLALSLGLILLGVFIPFPKVPKHQSVPLALHFTEHYARFIPTILSVAIPLIQRDAVGLFQVANASIATTFLTHATKRALNHVTINDQRLGERPYGGNFNMPSGHSSMVGLAVAFLMRRYSVKKYLWLLPLIPLTMLARIYLDMHTIGAVLAGLGTGMLCVGLFTSPKNLN.

The next 5 helical transmembrane spans lie at 22-42 (LLAL…PKVP), 60-80 (FIPT…VGLF), 117-137 (GNFN…AFLM), 145-162 (YLWL…RIYL), and 164-184 (MHTI…VGLF).

This sequence belongs to the lipid A LpxE 1-phosphatase family.

It is found in the cell inner membrane. It participates in bacterial outer membrane biogenesis; LPS lipid A biosynthesis. Its function is as follows. Removes the 1-phosphate group from tetra- and probably hexaacylated lipid A species. Absence of the 1-phosphate group renders the bacteria partially resistant to host-derived cationic antimicrobial peptides (CAMP), allowing it to camouflage itself from the host innate immune response, and plays a role in the long-term colonization of the host's stomach. In Helicobacter pylori (strain J99 / ATCC 700824) (Campylobacter pylori J99), this protein is Lipid A 1-phosphatase.